The chain runs to 86 residues: Small ribosomal subunit protein bS20 (86 aa).

The segment at 1–25 (MANIKSQIKRNKQNEKRHERNKAVK) is disordered. A compositionally biased stretch (basic and acidic residues) spans 12 to 22 (KQNEKRHERNK).

The protein belongs to the bacterial ribosomal protein bS20 family.

Its function is as follows. Binds directly to 16S ribosomal RNA. The protein is Small ribosomal subunit protein bS20 of Nocardioides sp. (strain ATCC BAA-499 / JS614).